Here is a 351-residue protein sequence, read N- to C-terminus: Ribosomal RNA large subunit methyltransferase M (351 aa).

S-adenosyl-L-methionine-binding positions include S183, 216-219 (APGG), D235, D255, and D271. The active-site Proton acceptor is the K300.

It belongs to the class I-like SAM-binding methyltransferase superfamily. RNA methyltransferase RlmE family. RlmM subfamily. In terms of assembly, monomer.

The protein localises to the cytoplasm. The catalysed reaction is cytidine(2498) in 23S rRNA + S-adenosyl-L-methionine = 2'-O-methylcytidine(2498) in 23S rRNA + S-adenosyl-L-homocysteine + H(+). Functionally, catalyzes the 2'-O-methylation at nucleotide C2498 in 23S rRNA. This chain is Ribosomal RNA large subunit methyltransferase M, found in Ectopseudomonas mendocina (strain ymp) (Pseudomonas mendocina).